A 30-amino-acid chain; its full sequence is Thermophilic aminopeptidase 1 alpha chain (30 aa).

Belongs to the peptidase M42 family. As to quaternary structure, 12 chains of two different but homologous types, alpha and beta, which can combine in various ratios. A divalent metal cation is required as a cofactor.

Its function is as follows. Metalloenzyme of broad specificity, releasing all N-terminal amino acids. In Geobacillus stearothermophilus (Bacillus stearothermophilus), this protein is Thermophilic aminopeptidase 1 alpha chain.